The sequence spans 364 residues: Paraneoplastic antigen Ma2 homolog (364 aa).

Ala-2 is subject to N-acetylalanine. Acidic residues predominate over residues 335-351 (EEEEATFENENTEEPEG). Residues 335 to 364 (EEEEATFENENTEEPEGGDGYGHWGNEAND) are disordered.

The protein belongs to the PNMA family.

Its subcellular location is the nucleus. It is found in the nucleolus. In Bos taurus (Bovine), this protein is Paraneoplastic antigen Ma2 homolog (PNMA2).